The primary structure comprises 122 residues: MIQTQSMLDVADNSGARRVMCIKVLGGSHRRYAGIGDIIKVTVKEAIPRGKVKKGQVMTAVVVRTRHGVRRPDGSIIRFDGNAAVLLNNKQEPIGTRIFGPVTRELRTEKFMKIVSLAPEVL.

The protein belongs to the universal ribosomal protein uL14 family. As to quaternary structure, part of the 50S ribosomal subunit. Forms a cluster with proteins L3 and L19. In the 70S ribosome, L14 and L19 interact and together make contacts with the 16S rRNA in bridges B5 and B8.

Functionally, binds to 23S rRNA. Forms part of two intersubunit bridges in the 70S ribosome. This Stutzerimonas stutzeri (strain A1501) (Pseudomonas stutzeri) protein is Large ribosomal subunit protein uL14.